The following is a 669-amino-acid chain: Methionine--tRNA ligase (669 aa).

The 'HIGH' region signature appears at 15–25 (PYANGPAHIGH). Residues Cys146, Cys149, Cys158, and Cys162 each contribute to the Zn(2+) site. A 'KMSKS' region motif is present at residues 328–332 (KFSKS). Lys331 provides a ligand contact to ATP. Residues 570-669 (QFKALDLRVG…KEVPAGCGIR (100 aa)) enclose the tRNA-binding domain.

The protein belongs to the class-I aminoacyl-tRNA synthetase family. MetG type 1 subfamily. As to quaternary structure, homodimer. Zn(2+) serves as cofactor.

The protein resides in the cytoplasm. It catalyses the reaction tRNA(Met) + L-methionine + ATP = L-methionyl-tRNA(Met) + AMP + diphosphate. Functionally, is required not only for elongation of protein synthesis but also for the initiation of all mRNA translation through initiator tRNA(fMet) aminoacylation. The chain is Methionine--tRNA ligase from Methanothrix thermoacetophila (strain DSM 6194 / JCM 14653 / NBRC 101360 / PT) (Methanosaeta thermophila).